Here is a 767-residue protein sequence, read N- to C-terminus: MPVFTASFQCVTLFGQPASAADAQPLLQGQRPFLHLHARRRRPCGPMLISKSPPYPASEETREWEADGQHEHTDELRETTTTMIDGIRTALRSIGEGEISISAYDTSLVALLKRLDGGDGPQFPSTIDWIVQNQLPDGSWGDASFFMMGDRIMSTLACVVALKSWNIHTDKCERGLLFIQENMWRLAHEEEDWMLVGFEIALPSLLDMAKDLDLDIPYDEPALKAIYAERERKLAKIPRDVLHSMPTTLLHSLEGMVDLDWEKLLKLRCLDGSFHCSPASTATAFQQTGDQKCFEYLDGIVKKFNGGVPCIYPLDVYERLWAVDRLTRLGISRHFTSEIEDCLDYIFRNWTPDGLAHTKNCPVKDIDDTAMGFRLLRLYGYQVDPCVLKKFEKDGKFFCLHGESNPSSVTPMYNTYRASQLKFPGDDGVLGRAEVFCRSFLQDRRGSNRMKDKWAIAKDIPGEVEYAMDYPWKASLPRIETRLYLDQYGGSGDVWIGKVLHRMTLFCNDLYLKAAKADFSNFQKECRVELNGLRRWYLRSNLEKFGGTDPQTTLMTSYFLASANIFEANRAAERLGWARVALLADAVSSHFRRIGGPKNSTSNLEELISLVPFDDAYSGSLREAWKQWLMAWTAKESSQESIEGDTAILLVRAIEIFGGRHVLTGQRPDLWEYSQLEQLTSSICCKLSRRVLAQENGESTEKVEEIDQQVDLEMQELTRRVLQGCSAINRLTRETFLHVVKSFCYVAYCSPETIDSHIDKVIFQDVI.

Residues 1-47 (MPVFTASFQCVTLFGQPASAADAQPLLQGQRPFLHLHARRRRPCGPM) constitute a chloroplast transit peptide. Positions 45 to 74 (GPMLISKSPPYPASEETREWEADGQHEHTD) are disordered. Over residues 59–74 (EETREWEADGQHEHTD) the composition is skewed to basic and acidic residues. Residue K233 participates in substrate binding. Positions 365 and 367 each coordinate Mg(2+). Positions 365–368 (DIDD) match the DXDD motif motif. Residue K453 coordinates substrate.

The protein belongs to the terpene synthase family. Mg(2+) serves as cofactor.

The protein localises to the plastid. It localises to the chloroplast. It carries out the reaction (2E,6E,10E)-geranylgeranyl diphosphate = 9alpha-copalyl diphosphate. Its function is as follows. Catalyzes the conversion of geranylgeranyl diphosphate to the phytoalexin precursor syn-copalyl diphosphate. Required for the biosynthesis of momilactones that exude from roots and act as allelochemicals against lowland weeds in paddy soil. This chain is Syn-copalyl diphosphate synthase, chloroplastic, found in Oryza sativa subsp. japonica (Rice).